Consider the following 445-residue polypeptide: Chromosomal replication initiator protein DnaA (445 aa).

The tract at residues 1–73 (MSPNSTLWQT…NELATKYSST (73 aa)) is domain I, interacts with DnaA modulators. The interval 73–102 (TPVRLKFVSQEEVIEEPVADRKLTIDYRQG) is domain II. The segment at 103–323 (NLNSTYTFDS…GALIRLISYA (221 aa)) is domain III, AAA+ region. ATP-binding residues include glycine 147, glycine 149, lysine 150, and threonine 151. Positions 324-445 (QTFNLEITMN…KFAVDSIVKK (122 aa)) are domain IV, binds dsDNA.

The protein belongs to the DnaA family. Oligomerizes as a right-handed, spiral filament on DNA at oriC.

The protein localises to the cytoplasm. Plays an essential role in the initiation and regulation of chromosomal replication. ATP-DnaA binds to the origin of replication (oriC) to initiate formation of the DNA replication initiation complex once per cell cycle. Binds the DnaA box (a 9 base pair repeat at the origin) and separates the double-stranded (ds)DNA. Forms a right-handed helical filament on oriC DNA; dsDNA binds to the exterior of the filament while single-stranded (ss)DNA is stabiized in the filament's interior. The ATP-DnaA-oriC complex binds and stabilizes one strand of the AT-rich DNA unwinding element (DUE), permitting loading of DNA polymerase. After initiation quickly degrades to an ADP-DnaA complex that is not apt for DNA replication. Binds acidic phospholipids. In Acholeplasma laidlawii, this protein is Chromosomal replication initiator protein DnaA.